The following is a 114-amino-acid chain: MVDQNPKRSGEPPVWLMFGAGGTVSAIFLPVVILIIGLLLPFGLVNVHNLITFAYSWIGKLVILVLTIFPMWCGLHRIHHGMHDLKVHVPAGGFIFYGLATIYTVWVLFAVINL.

The next 3 helical transmembrane spans lie at 24–44 (VSAIFLPVVILIIGLLLPFGL), 50–70 (LITFAYSWIGKLVILVLTIFP), and 92–112 (GGFIFYGLATIYTVWVLFAVI).

Belongs to the FrdD family. As to quaternary structure, part of an enzyme complex containing four subunits: a flavoprotein (FrdA), an iron-sulfur protein (FrdB), and two hydrophobic anchor proteins (FrdC and FrdD).

It is found in the cell inner membrane. Its function is as follows. Anchors the catalytic components of the fumarate reductase complex to the cell membrane, binds quinones. This is Fumarate reductase subunit D from Haemophilus influenzae (strain PittGG).